A 4249-amino-acid polypeptide reads, in one-letter code: Fibrocystin-L (4249 aa).

A signal peptide spans 1 to 20 (MGHLWLSGTWFLFGLLWCAA). Topologically, residues 21-4222 (DSHKGSSETI…TPVQTLAVIT (4202 aa)) are extracellular. IPT/TIG domains are found at residues 31-132 (PKVT…GVAS), 146-255 (PTIR…KMTY), 270-361 (PEVV…ILEY), 1067-1153 (PLIL…HFIY), 1155-1234 (SQIS…SFSY), 1240-1323 (PVVT…KLNA), 1329-1468 (LEVI…SFSY), 1565-1648 (PSII…TLTK), 1658-1742 (PNID…SFSY), 1748-1827 (PYVT…NLTI), 1830-1909 (PAVA…SFTY), 1915-1996 (PFLK…AFEY), 1998-2084 (LSIQ…LFTY), and 2090-2175 (PLIT…DFLY). Positions 337 to 492 (PGGRGLKVEV…NVFTEQQTGD (156 aa)) constitute a PA14 domain. Thr1297 and Thr1359 each carry an O-linked (GalNAc...) threonine glycan. Residue Thr1838 is glycosylated (O-linked (GalNAc...) threonine). The region spanning 2183–2303 (SSWGGSPPPE…IPVVWTRLTH (121 aa)) is the G8 1 domain. PbH1 repeat units follow at residues 2484-2506 (QFKS…TIHN), 2507-2529 (THHL…FIED), 2565-2587 (NPNN…WYRM), 2664-2686 (GGAL…ETKR), and 2732-2755 (SQGL…ALGV). The G8 2 domain occupies 3035–3173 (SFWQSSPENN…HSVYKTKLLE (139 aa)). PbH1 repeat units lie at residues 3292–3314 (KGNA…RDST), 3354–3376 (TDGV…RIWG), 3415–3437 (GTNT…RIDG), 3470–3492 (PGCS…YFQT), and 3493–3514 (TESV…FSMV). The O-linked (GalNAc...) threonine glycan is linked to Thr3735. Residues 4183–4208 (LSAQSVPGGSGSSPGSGSSSSGHSKA) are disordered. Over residues 4197-4208 (GSGSSSSGHSKA) the composition is skewed to low complexity. A helical transmembrane segment spans residues 4223-4243 (ACLVGRLLLLEVFMAAVFILN). Residues 4244–4249 (TTVGIN) lie on the Cytoplasmic side of the membrane.

Expressed in neurons in the hippocampus and the cerebral cortex (at protein level). Transiently expressed at high levels in inner ear hair cells, predominantly in outer hair cells, during early postnatal development (at protein level).

Its subcellular location is the membrane. It is found in the cell projection. The protein localises to the stereocilium membrane. In terms of biological role, component of hair-cell stereocilia coat. Required for normal hearing. This Mus musculus (Mouse) protein is Fibrocystin-L (Pkhd1l1).